The chain runs to 127 residues: uncharacterized protein (127 aa).

A helical transmembrane segment spans residues 5-25 (ILGITIAFIILLLTTVAILFS).

The protein resides in the membrane. This is an uncharacterized protein from Mycoplasma genitalium (strain ATCC 33530 / DSM 19775 / NCTC 10195 / G37) (Mycoplasmoides genitalium).